An 807-amino-acid polypeptide reads, in one-letter code: Glycerol-3-phosphate acyltransferase (807 aa).

Residues 308-313 (CHRSHM) carry the HXXXXD motif motif.

Belongs to the GPAT/DAPAT family.

It localises to the cell inner membrane. The enzyme catalyses sn-glycerol 3-phosphate + an acyl-CoA = a 1-acyl-sn-glycero-3-phosphate + CoA. Its pathway is phospholipid metabolism; CDP-diacylglycerol biosynthesis; CDP-diacylglycerol from sn-glycerol 3-phosphate: step 1/3. This chain is Glycerol-3-phosphate acyltransferase, found in Shewanella halifaxensis (strain HAW-EB4).